The following is a 124-amino-acid chain: Small ribosomal subunit protein bS6 (124 aa).

The disordered stretch occupies residues 101–124 (IMMKEVQREEARKSAQSDAPAVAA). Over residues 105-115 (EVQREEARKSA) the composition is skewed to basic and acidic residues.

The protein belongs to the bacterial ribosomal protein bS6 family.

In terms of biological role, binds together with bS18 to 16S ribosomal RNA. This is Small ribosomal subunit protein bS6 from Polynucleobacter asymbioticus (strain DSM 18221 / CIP 109841 / QLW-P1DMWA-1) (Polynucleobacter necessarius subsp. asymbioticus).